Reading from the N-terminus, the 69-residue chain is Large ribosomal subunit protein bL31 (69 aa).

The Zn(2+) site is built by Cys16, Cys18, Cys38, and Cys41.

This sequence belongs to the bacterial ribosomal protein bL31 family. Type A subfamily. Part of the 50S ribosomal subunit. It depends on Zn(2+) as a cofactor.

Its function is as follows. Binds the 23S rRNA. The sequence is that of Large ribosomal subunit protein bL31 from Cutibacterium acnes (strain DSM 16379 / KPA171202) (Propionibacterium acnes).